A 246-amino-acid chain; its full sequence is Purine nucleoside phosphorylase Cgl2154/cg2365 (246 aa).

Residues His68, Cys107, and His124 each coordinate Zn(2+).

It belongs to the purine nucleoside phosphorylase YfiH/LACC1 family. In terms of assembly, homodimer. Cu(2+) serves as cofactor. The cofactor is Zn(2+).

The enzyme catalyses adenosine + phosphate = alpha-D-ribose 1-phosphate + adenine. The catalysed reaction is S-methyl-5'-thioadenosine + phosphate = 5-(methylsulfanyl)-alpha-D-ribose 1-phosphate + adenine. It catalyses the reaction inosine + phosphate = alpha-D-ribose 1-phosphate + hypoxanthine. It carries out the reaction adenosine + H2O + H(+) = inosine + NH4(+). In terms of biological role, purine nucleoside enzyme that catalyzes the phosphorolysis of adenosine and inosine nucleosides, yielding D-ribose 1-phosphate and the respective free bases, adenine and hypoxanthine. Also catalyzes the phosphorolysis of S-methyl-5'-thioadenosine into adenine and S-methyl-5-thio-alpha-D-ribose 1-phosphate. Also has adenosine deaminase activity. In Corynebacterium glutamicum (strain ATCC 13032 / DSM 20300 / JCM 1318 / BCRC 11384 / CCUG 27702 / LMG 3730 / NBRC 12168 / NCIMB 10025 / NRRL B-2784 / 534), this protein is Purine nucleoside phosphorylase Cgl2154/cg2365.